The sequence spans 364 residues: MTMLSDLPKIPTLDWADFAEGDTDQRLKLAQGLVQGFKRFGFVKLVNHGLSDELIQQLFAEVKRFYRLPDELKQKAAHPPGPNPQRGWSGIGVESTSKLYGEQTERPSGKLKDAKVGTDFSSSKLSRELTHMKEHYDIGPPTDTQFPTRWPDEQDIPGWRAFMESYYARGQSFCLDLMEALEIGLELPKNTLRSMCIPDGSELRLLHYPEIPAAELRTGDTARIWPHTDFGLITLLFQDGVGGLEVEDPLQQGHYIEVAREQPYEMIVNVSATFERWMNGVIKAAVHRVNITPEGKHVEDAVVPERWSAAYFFKAHKMAHAGPLPAFVTPERPALYDNITALEFQKRRTDLVYTGQQLKVEEAA.

Positions 73–92 are disordered; that stretch reads KQKAAHPPGPNPQRGWSGIG. Residues 199-315 form the Fe2OG dioxygenase domain; that stretch reads DGSELRLLHY…RWSAAYFFKA (117 aa). Positions 227, 229, and 287 each coordinate Fe cation. Residue arginine 306 coordinates 2-oxoglutarate.

Belongs to the iron/ascorbate-dependent oxidoreductase family. Requires Fe(2+) as cofactor.

It participates in secondary metabolite biosynthesis. Functionally, 2-oxoglutarate-dependent dioxygenase; part of the gene cluster that mediates the biosynthesis of imizoquins A to D, tripeptide-derived alkaloids that serve a protective role against oxidative stress that are essential for normal germination. ImqB is a canonical three-module NRPS that assembles the tripeptide backbone of the imizoquins via condensation of Trp, Tyr, and Leu-derived precursors. N-methylation by imqF and phenol oxidation by imqC, followed by cyclization via the FAD-dependent oxidase imqH carry out the three-step transformation of L-tyrosine into tetrahydroisoquinoline. Importantly, this sequence requires the presence of a free amine in the tyrosine moiety, indicating that isoquinoline formation occurs prior to peptide bond formation. The imidazolidin-4-one ring of imizoquins could form following additional oxidation of the methyl-derived bridgehead carbon by imqH. Lastly, O-methylation by imqG and leucine hydroxylation by imqE complete biosynthesis of the imizoquins. This Aspergillus flavus (strain ATCC 200026 / FGSC A1120 / IAM 13836 / NRRL 3357 / JCM 12722 / SRRC 167) protein is 2-oxoglutarate-dependent dioxygenase imqE.